The chain runs to 703 residues: Fibulin-1 (703 aa).

A signal peptide spans 1 to 29 (MERAAPSRRVPLPLLLLGGLALLAAGVDA). 35 disulfides stabilise this stretch: Cys36–Cys61, Cys37–Cys68, Cys50–Cys69, Cys78–Cys109, Cys91–Cys110, Cys112–Cys136, Cys113–Cys143, Cys126–Cys144, Cys180–Cys190, Cys186–Cys199, Cys201–Cys214, Cys220–Cys233, Cys227–Cys242, Cys248–Cys260, Cys266–Cys279, Cys273–Cys288, Cys294–Cys306, Cys312–Cys325, Cys319–Cys334, Cys341–Cys354, Cys360–Cys373, Cys367–Cys382, Cys384–Cys397, Cys403–Cys415, Cys411–Cys424, Cys426–Cys439, Cys445–Cys454, Cys450–Cys463, Cys465–Cys479, Cys485–Cys498, Cys494–Cys507, Cys509–Cys523, Cys529–Cys542, Cys536–Cys551, and Cys556–Cys577. 3 consecutive Anaphylatoxin-like domains span residues 36 to 76 (CCAD…LEEL), 77 to 111 (HCAT…RCCH), and 112 to 144 (CCLL…QACC). N-linked (GlcNAc...) (complex) asparagine glycosylation occurs at Asn98. The region spanning 176–215 (LNDRCRGGGPCKQQCRDTGDEVVCSCFVGYQLLSDGVSCE) is the EGF-like 1 domain. The EGF-like 2; calcium-binding domain maps to 216 to 261 (DVNECITGSHSCRLGESCINTVGSFRCQRDSSCGTGYELTEDNSCK). An EGF-like 3; calcium-binding domain is found at 262–307 (DIDECESGIHNCLPDFICQNTLGSFRCRPKLQCKSGFIQDALGNCI). In terms of domain architecture, EGF-like 4; calcium-binding spans 308–355 (DINECLSISAPCPIGHTCINTEGSYTCQKNVPNCGRGYHLNEEGTRCV). The EGF-like 5; calcium-binding domain occupies 356–398 (DVDECAPPAEPCGKGHRCVNSPGSFRCECKTGYYFDGISRMCV). The tract at residues 356 to 440 (DVDECAPPAE…RLSVDGRSCE (85 aa)) is self-association and FN1-binding; calcium is necessary for homotypic binding, but not for heterotypic binding. Residues 399–440 (DVNECQRYPGRLCGHKCENTLGSYLCSCSVGFRLSVDGRSCE) enclose the EGF-like 6; calcium-binding domain. One can recognise an EGF-like 7; calcium-binding domain in the interval 441-480 (DINECSSSPCSQECANVYGSYQCYCRRGYQLSDVDGVTCE). An EGF-like 8; calcium-binding domain is found at 481–524 (DIDECALPTGGHICSYRCINIPGSFQCSCPSSGYRLAPNGRNCQ). The EGF-like 9; calcium-binding domain maps to 525–578 (DIDECVTGIHNCSINETCFNIQGGFRCLAFECPENYRRSAATLQQEKTDTVRCI). Residues Asn535 and Asn539 are each glycosylated (N-linked (GlcNAc...) asparagine).

This sequence belongs to the fibulin family. Homomultimerizes and interacts with various extracellular matrix components such as FN1, LAMA1, LAMA2, NID, ACAN, CSPG2 and type IV collagen. Also interacts with APP and FGB. Interacts with FBLN7. Interacts with CCN3. In terms of assembly, (Microbial infection) Interacts with human papillomavirus/HPV type 16, 18 and 31 proteins E6. Isoform A and isoform B are only expressed in placenta. Isoform C and isoform D are expressed in a variety of tissues and cultured cells.

Its subcellular location is the secreted. It localises to the extracellular space. The protein resides in the extracellular matrix. In terms of biological role, incorporated into fibronectin-containing matrix fibers. May play a role in cell adhesion and migration along protein fibers within the extracellular matrix (ECM). Could be important for certain developmental processes and contribute to the supramolecular organization of ECM architecture, in particular to those of basement membranes. Has been implicated in a role in cellular transformation and tumor invasion, it appears to be a tumor suppressor. May play a role in haemostasis and thrombosis owing to its ability to bind fibrinogen and incorporate into clots. Could play a significant role in modulating the neurotrophic activities of APP, particularly soluble APP. The chain is Fibulin-1 (FBLN1) from Homo sapiens (Human).